The chain runs to 330 residues: D-lactate dehydrogenase (330 aa).

Residues 156–157, aspartate 176, 206–207, 233–235, and aspartate 259 contribute to the NAD(+) site; these read RI, VP, and AAR. The active site involves arginine 235. Glutamate 264 is a catalytic residue. Histidine 296 acts as the Proton donor in catalysis.

Belongs to the D-isomer specific 2-hydroxyacid dehydrogenase family.

It catalyses the reaction (R)-lactate + NAD(+) = pyruvate + NADH + H(+). This Staphylococcus aureus (strain MSSA476) protein is D-lactate dehydrogenase (ldhD).